The sequence spans 87 residues: MKLSIFFVLFFIAIAYCQPEFLDDEEDEVEETLPVAEEGREKSCITWRNSCMHNDKGCCFPWSCVCWSQTVSRNSSGKEKKCQCRLW.

Positions 1–17 (MKLSIFFVLFFIAIAYC) are cleaved as a signal peptide. The propeptide occupies 18–40 (QPEFLDDEEDEVEETLPVAEEGR). Cystine bridges form between Cys-44–Cys-59, Cys-51–Cys-64, Cys-58–Cys-84, and Cys-66–Cys-82.

Belongs to the neurotoxin omega-lctx family. Expressed by the venom gland.

The protein resides in the secreted. Its function is as follows. Modulates Cav2.1/CACNA1A voltage-gated calcium channels (P/Q-type currents) in rat cerebellar Purkinje cells and hippocampal CA1-CA3 neurons. At saturating concentrations (&gt;10 nM) decelerates activation kinetics and slightly increases peak amplitude without affecting deactivation kinetics. In vivo, does not cause death when intravenously injected into mice. In rat models, through its activity on Cav2.1/CACNA1A, has an ameliorative effect on memory defects provoked by hyperstimulation of N-methyl-D-aspartate receptors (NMDARs) in the hippocampus. In Alopecosa marikovskyi (Wolf spider), this protein is Omega-lycotoxin-Am1c.